The following is a 205-amino-acid chain: Outer-membrane lipoprotein LolB (205 aa).

A signal peptide spans 1 to 17 (MFLRHFIVFSFIALLAG). Cys18 carries the N-palmitoyl cysteine lipid modification. The S-diacylglycerol cysteine moiety is linked to residue Cys18.

Belongs to the LolB family. Monomer.

The protein resides in the cell outer membrane. Plays a critical role in the incorporation of lipoproteins in the outer membrane after they are released by the LolA protein. This chain is Outer-membrane lipoprotein LolB, found in Pseudomonas fluorescens (strain ATCC BAA-477 / NRRL B-23932 / Pf-5).